A 435-amino-acid polypeptide reads, in one-letter code: UDP-N-acetylmuramate--L-alanine ligase (435 aa).

108-114 provides a ligand contact to ATP; that stretch reads GAHGKST.

The protein belongs to the MurCDEF family.

It is found in the cytoplasm. The catalysed reaction is UDP-N-acetyl-alpha-D-muramate + L-alanine + ATP = UDP-N-acetyl-alpha-D-muramoyl-L-alanine + ADP + phosphate + H(+). It functions in the pathway cell wall biogenesis; peptidoglycan biosynthesis. Its function is as follows. Cell wall formation. In Campylobacter curvus (strain 525.92), this protein is UDP-N-acetylmuramate--L-alanine ligase.